A 586-amino-acid chain; its full sequence is Old nuclease (586 aa).

The tract at residues 1-163 is ATPase domain N-terminus; it reads MTVRLASVSI…VEDSTKCKNT (163 aa). 34–38 lines the ATP pocket; it reads NAGKS. The tract at residues 164–270 is dimerization domain; sequence TTIGKILSAI…SRFGHGTQRS (107 aa). Residues 271–390 are ATPase domain C-terminus; it reads IQMALIQYLA…TLSNSSYLLF (120 aa). Residues 393–586 form a toprim domain region; that stretch reads EVLLVEGKTE…DEMEDFIKWI (194 aa). Glu398, Glu402, Asp453, Asp455, Asp541, and Glu543 together coordinate a divalent metal cation. Arg570 serves as the catalytic Stabilizes transition state or protonates leaving group.

The protein belongs to the class 1 OLD nuclease family. The cofactor is Mg(2+).

The enzyme catalyses Exonucleolytic cleavage in the 5'- to 3'-direction to yield nucleoside 5'-phosphates.. An exonuclease that acts preferentially on linear dsDNA, processively degrading it from 5'-3', releasing 5'-phosphomononucleotides. Initiates on 5'-phosphate and 5'-hydroxyl ends. Also acts on linear ssDNA, nicked DNA and RNA. ATP enhances but is not necessary for exonuclease activity; has ATPase activity that is not stimulated by DNA. The old protein kills E.coli recB and recC mutants and interferes with phage lambda growth. Both the exonuclease and ATPase activities are required in vivo. Probably interferes with lambda phage by degrading its linear DNA. Isolated as a mutant able to lysogenize E.coli strain C cells normally not susceptible to lysis by phage P2. This chain is Old nuclease, found in Enterobacteriaceae (Bacteriophage P2).